Here is a 379-residue protein sequence, read N- to C-terminus: Protein RecA (379 aa).

Position 79 to 86 (79 to 86 (GPESSGKT)) interacts with ATP.

This sequence belongs to the RecA family.

The protein localises to the cytoplasm. Its function is as follows. Can catalyze the hydrolysis of ATP in the presence of single-stranded DNA, the ATP-dependent uptake of single-stranded DNA by duplex DNA, and the ATP-dependent hybridization of homologous single-stranded DNAs. It interacts with LexA causing its activation and leading to its autocatalytic cleavage. This chain is Protein RecA, found in Streptococcus uberis (strain ATCC BAA-854 / 0140J).